A 202-amino-acid chain; its full sequence is Large ribosomal subunit protein bL17 (202 aa).

Residues 148–202 (DEAPAAESTDAAQVEAGGVEQPDTLPDADAPATADEGVEVDAAEVDPSDEKKDQA) are disordered. Over residues 169–182 (PDTLPDADAPATAD) the composition is skewed to low complexity. The segment covering 183–194 (EGVEVDAAEVDP) has biased composition (acidic residues).

It belongs to the bacterial ribosomal protein bL17 family. As to quaternary structure, part of the 50S ribosomal subunit. Contacts protein L32.

The polypeptide is Large ribosomal subunit protein bL17 (Kineococcus radiotolerans (strain ATCC BAA-149 / DSM 14245 / SRS30216)).